Here is a 211-residue protein sequence, read N- to C-terminus: Uracil phosphoribosyltransferase (211 aa).

Residues R78, R103, and 130-138 (DPMLATGGT) each bind 5-phospho-alpha-D-ribose 1-diphosphate. Uracil-binding positions include I195 and 200-202 (GDA). D201 lines the 5-phospho-alpha-D-ribose 1-diphosphate pocket.

The protein belongs to the UPRTase family. Requires Mg(2+) as cofactor.

It catalyses the reaction UMP + diphosphate = 5-phospho-alpha-D-ribose 1-diphosphate + uracil. It participates in pyrimidine metabolism; UMP biosynthesis via salvage pathway; UMP from uracil: step 1/1. With respect to regulation, allosterically activated by GTP. In terms of biological role, catalyzes the conversion of uracil and 5-phospho-alpha-D-ribose 1-diphosphate (PRPP) to UMP and diphosphate. This is Uracil phosphoribosyltransferase from Streptomyces griseus subsp. griseus (strain JCM 4626 / CBS 651.72 / NBRC 13350 / KCC S-0626 / ISP 5235).